Here is a 430-residue protein sequence, read N- to C-terminus: Inactive metallocarboxypeptidase ECM14 (430 aa).

The first 24 residues, 1–24 (MLHMNSLWGCFLFVLLAVTGAVQG), serve as a signal peptide directing secretion. Positions 25–105 (LQEDYSEYAV…TLPTSQMMAR (81 aa)) are excised as a propeptide. Asn-41 is a glycosylation site (N-linked (GlcNAc...) asparagine). In terms of domain architecture, Peptidase M14 spans 120-425 (EYRDLDTIYM…AALKYFCDFL (306 aa)). Residues His-182 and Glu-185 each coordinate Zn(2+). Residues 182-185 (HARE), Arg-240, and 257-258 (DH) contribute to the substrate site. An intrachain disulfide couples Cys-251 to Cys-272. N-linked (GlcNAc...) asparagine glycosylation is present at Asn-295. Zn(2+) is bound at residue His-310. 311–312 (SY) is a substrate binding site.

This sequence belongs to the peptidase M14 family. Zn(2+) is required as a cofactor. In terms of processing, N-glycosylated.

The protein localises to the vacuole. It localises to the secreted. Functionally, inactive carboxypeptidase that may play a role in cell wall organization and biogenesis. The polypeptide is Inactive metallocarboxypeptidase ECM14 (Saccharomyces cerevisiae (strain ATCC 204508 / S288c) (Baker's yeast)).